A 514-amino-acid chain; its full sequence is 2,3-bisphosphoglycerate-independent phosphoglycerate mutase (514 aa).

Positions 14 and 64 each coordinate Mn(2+). Residue serine 64 is the Phosphoserine intermediate of the active site. Residues histidine 125, 155–156, arginine 187, arginine 193, 263–266, and lysine 336 contribute to the substrate site; these read RD and RADR. Aspartate 403, histidine 407, aspartate 444, histidine 445, and histidine 463 together coordinate Mn(2+).

This sequence belongs to the BPG-independent phosphoglycerate mutase family. As to quaternary structure, monomer. It depends on Mn(2+) as a cofactor.

The catalysed reaction is (2R)-2-phosphoglycerate = (2R)-3-phosphoglycerate. The protein operates within carbohydrate degradation; glycolysis; pyruvate from D-glyceraldehyde 3-phosphate: step 3/5. In terms of biological role, catalyzes the interconversion of 2-phosphoglycerate and 3-phosphoglycerate. This is 2,3-bisphosphoglycerate-independent phosphoglycerate mutase from Escherichia coli (strain ATCC 8739 / DSM 1576 / NBRC 3972 / NCIMB 8545 / WDCM 00012 / Crooks).